We begin with the raw amino-acid sequence, 333 residues long: Tetraacyldisaccharide 4'-kinase (333 aa).

An ATP-binding site is contributed by 55 to 62 (TAGGNGKT).

Belongs to the LpxK family.

The enzyme catalyses a lipid A disaccharide + ATP = a lipid IVA + ADP + H(+). The protein operates within glycolipid biosynthesis; lipid IV(A) biosynthesis; lipid IV(A) from (3R)-3-hydroxytetradecanoyl-[acyl-carrier-protein] and UDP-N-acetyl-alpha-D-glucosamine: step 6/6. Functionally, transfers the gamma-phosphate of ATP to the 4'-position of a tetraacyldisaccharide 1-phosphate intermediate (termed DS-1-P) to form tetraacyldisaccharide 1,4'-bis-phosphate (lipid IVA). This is Tetraacyldisaccharide 4'-kinase from Pectobacterium atrosepticum (strain SCRI 1043 / ATCC BAA-672) (Erwinia carotovora subsp. atroseptica).